The primary structure comprises 489 residues: MGANNGKQSGSEGKGSSSISSDLSSSTDQTSTKAPKNAATSEDSDLSMRTVSTPSPALILPPRSSSAVLNGSSTSSSTFGTETIAMVHMPPTSLTHPQRCLRQPRDQQGAPVDILPDHAFLQIFTHLPTNQLCRCARVCRRWYNLAWDPRLWRTIRLTGDVLHVDRALRVLTRRLCQDTPNVCLTVETVMVSGCRRLTDRGLYTVAQSCPELRRLEVAGCYNVSNEAVFEVVSRCPNLEHLDVSGCSKVTCISLTRDVSVKLSPLHGQQISIRFLDMTDCFALEDEGLHTIAAHCTQLTHLYLRRCVRLTDEGLRFLVIYCPGVRELSVSDCRFISDFGLREIAKLEGRLRYLSIAHCSRITDVGVRYVAKYCSRLRYLNARGCEGLTDHGIEHLAKSCLKLKSLDIGKCPLVSDAGLEQLALNSFNLKRLSLKSCESITGRGLQVVAANCFDLQLLNVQDCDVSLEALRFVKRHCKRCIIEHTNPAFF.

The span at 1 to 31 (MGANNGKQSGSEGKGSSSISSDLSSSTDQTS) shows a compositional bias: low complexity. The disordered stretch occupies residues 1–76 (MGANNGKQSG…AVLNGSSTSS (76 aa)). A compositionally biased stretch (polar residues) spans 32-55 (TKAPKNAATSEDSDLSMRTVSTPS). Residues 64-76 (SSSAVLNGSSTSS) show a composition bias toward low complexity. The F-box domain occupies 109-155 (GAPVDILPDHAFLQIFTHLPTNQLCRCARVCRRWYNLAWDPRLWRTI). 11 LRR repeats span residues 168–193 (LRVL…MVSG), 194–219 (CRRL…EVAG), 220–245 (CYNV…DVSG), 251–279 (CISL…DMTD), 280–305 (CFAL…YLRR), 306–331 (CVRL…SVSD), 332–357 (CRFI…SIAH), 358–383 (CSRI…NARG), 384–409 (CEGL…DIGK), 410–435 (CPLV…SLKS), and 436–461 (CESI…NVQD).

This sequence belongs to the FBXL7 family. In terms of assembly, part of the SCF (SKP1-CUL1-F-box) E3 ubiquitin-protein ligase complex SCF(FBXL7).

Its subcellular location is the cytoplasm. It is found in the cytoskeleton. It localises to the microtubule organizing center. The protein resides in the centrosome. The protein operates within protein modification; protein ubiquitination. Functionally, substrate recognition component of a SCF (SKP1-CUL1-F-box protein) E3 ubiquitin-protein ligase complex which mediates the ubiquitination and subsequent proteasomal degradation of target proteins. The sequence is that of F-box/LRR-repeat protein 7 (fbxl7) from Danio rerio (Zebrafish).